Reading from the N-terminus, the 227-residue chain is MSIIVALDAKSQYDALKIVEQLDPTLCRVKVGKELFTHEGPSVVKKLQEENFEVFLDLKFHDIPNTTAQAVCAAADLGVWMVNVHASGGRKMMETCVERLKAGNYQTQLIAVTVLTSMGREDLKDIGLDIEPVEQVKRLAKLTKESGLDGVVCSAQEAKILRELIGQDFSLVTPGIRPEGSNADDQKRIVTPKQAMLDGSTHLVIGRPITNAENPTEMLKSILASIA.

Substrate-binding positions include Asp-8, Lys-30, 57–66 (DLKFHDIPNT), Thr-116, Arg-177, Gln-186, Gly-206, and Arg-207. Lys-59 acts as the Proton donor in catalysis.

Belongs to the OMP decarboxylase family. Type 1 subfamily. As to quaternary structure, homodimer.

It catalyses the reaction orotidine 5'-phosphate + H(+) = UMP + CO2. The protein operates within pyrimidine metabolism; UMP biosynthesis via de novo pathway; UMP from orotate: step 2/2. In terms of biological role, catalyzes the decarboxylation of orotidine 5'-monophosphate (OMP) to uridine 5'-monophosphate (UMP). The polypeptide is Orotidine 5'-phosphate decarboxylase (Acinetobacter baumannii (strain AB307-0294)).